A 461-amino-acid polypeptide reads, in one-letter code: tRNA modification GTPase MnmE (461 aa).

Residues R22, E87, and R126 each coordinate (6S)-5-formyl-5,6,7,8-tetrahydrofolate. The region spanning G223–F382 is the TrmE-type G domain. N233 serves as a coordination point for K(+). GTP contacts are provided by residues N233–S238, T252–T258, and D277–G280. Residue S237 participates in Mg(2+) binding. 3 residues coordinate K(+): T252, I254, and T257. T258 provides a ligand contact to Mg(2+). (6S)-5-formyl-5,6,7,8-tetrahydrofolate is bound at residue K461.

Belongs to the TRAFAC class TrmE-Era-EngA-EngB-Septin-like GTPase superfamily. TrmE GTPase family. As to quaternary structure, homodimer. Heterotetramer of two MnmE and two MnmG subunits. It depends on K(+) as a cofactor.

It localises to the cytoplasm. Functionally, exhibits a very high intrinsic GTPase hydrolysis rate. Involved in the addition of a carboxymethylaminomethyl (cmnm) group at the wobble position (U34) of certain tRNAs, forming tRNA-cmnm(5)s(2)U34. The sequence is that of tRNA modification GTPase MnmE from Lysinibacillus sphaericus (strain C3-41).